Consider the following 654-residue polypeptide: Arrestin domain-containing protein C (654 aa).

The region spanning 1 to 105 is the C2 domain; the sequence is MTQRSLKINI…AKRNLMDQWL (105 aa). Residues 616-647 are a coiled coil; it reads AKRIFLKIQQIQSERQKQQEQQEQQVVSNLEA.

Belongs to the arrestin family.

This is Arrestin domain-containing protein C (adcC) from Dictyostelium discoideum (Social amoeba).